A 138-amino-acid chain; its full sequence is Small ribosomal subunit protein uS11c (138 aa).

Residues 1–22 form a disordered region; it reads MTKPIPRIGSRRNGRIGSRKNA. Residues 9-22 show a composition bias toward basic residues; sequence GSRRNGRIGSRKNA.

Belongs to the universal ribosomal protein uS11 family. As to quaternary structure, part of the 30S ribosomal subunit.

The protein localises to the plastid. It localises to the chloroplast. In Dioscorea elephantipes (Elephant's foot yam), this protein is Small ribosomal subunit protein uS11c.